The primary structure comprises 1101 residues: Type VI secretion system component TssM1 (1101 aa).

The helical transmembrane segment at 371–391 threads the bilayer; the sequence is LTIGALSATALVVLAVTAVWI.

It is found in the cell inner membrane. In terms of biological role, core component of the type VI (T6SS) secretion system that plays a role in the release of toxins targeting both eukaryotic and prokaryotic species. Plays an essential role in stabilization of assembled TssK1 structure at a fixed perimembrane site. The sequence is that of Type VI secretion system component TssM1 from Pseudomonas aeruginosa (strain ATCC 15692 / DSM 22644 / CIP 104116 / JCM 14847 / LMG 12228 / 1C / PRS 101 / PAO1).